The primary structure comprises 593 residues: NADH-quinone oxidoreductase subunit C/D (593 aa).

Residues Met-1–Gln-184 are NADH dehydrogenase I subunit C. The tract at residues Asp-208–Arg-593 is NADH dehydrogenase I subunit D.

In the N-terminal section; belongs to the complex I 30 kDa subunit family. This sequence in the C-terminal section; belongs to the complex I 49 kDa subunit family. As to quaternary structure, NDH-1 is composed of 13 different subunits. Subunits NuoB, CD, E, F, and G constitute the peripheral sector of the complex.

The protein localises to the cell inner membrane. The enzyme catalyses a quinone + NADH + 5 H(+)(in) = a quinol + NAD(+) + 4 H(+)(out). Its function is as follows. NDH-1 shuttles electrons from NADH, via FMN and iron-sulfur (Fe-S) centers, to quinones in the respiratory chain. The immediate electron acceptor for the enzyme in this species is believed to be ubiquinone. Couples the redox reaction to proton translocation (for every two electrons transferred, four hydrogen ions are translocated across the cytoplasmic membrane), and thus conserves the redox energy in a proton gradient. The polypeptide is NADH-quinone oxidoreductase subunit C/D (Pseudomonas fluorescens (strain ATCC BAA-477 / NRRL B-23932 / Pf-5)).